Here is a 275-residue protein sequence, read N- to C-terminus: Putative replication protein (275 aa).

In terms of domain architecture, BRCT spans 98 to 198; the sequence is SKAICFTPYD…RILKISEDYF (101 aa).

The polypeptide is Putative replication protein (Wigglesworthia glossinidia brevipalpis).